The chain runs to 147 residues: MLAQTFKKPHRAVLEQVSGTTVFIRNKRTKSKSSLSPLAQRVVTQLSVMSASRKQPKLLKLAREDLIKHQTIEKCWSIYQQQQRERRNLQLELQYKSIERSMNLLQELSPRLFEAANASEKGKRFPMEMKVPTDFPPNTLWHYNFRK.

A mitochondrion-targeting transit peptide spans 1 to 26 (MLAQTFKKPHRAVLEQVSGTTVFIRN).

This sequence belongs to the mitochondrion-specific ribosomal protein mL40 family. As to quaternary structure, component of the mitochondrial large ribosomal subunit (mt-LSU). Mature yeast 74S mitochondrial ribosomes consist of a small (37S) and a large (54S) subunit. The 37S small subunit contains a 15S ribosomal RNA (15S mt-rRNA) and 34 different proteins. The 54S large subunit contains a 21S rRNA (21S mt-rRNA) and 46 different proteins.

The protein localises to the mitochondrion. Component of the mitochondrial ribosome (mitoribosome), a dedicated translation machinery responsible for the synthesis of mitochondrial genome-encoded proteins, including at least some of the essential transmembrane subunits of the mitochondrial respiratory chain. The mitoribosomes are attached to the mitochondrial inner membrane and translation products are cotranslationally integrated into the membrane. This is Large ribosomal subunit protein mL40 (MRPL28) from Saccharomyces cerevisiae (strain ATCC 204508 / S288c) (Baker's yeast).